A 392-amino-acid chain; its full sequence is MTDKVLDDISHRRYNPLNGSWLLVSPHRTKRPWQGQQEAPALNKLPEYDPQCYLCPGNKRAQGDSNPHYKNTFAFVNDYSAVKEEQQEYHPRKDAAGDGDDDIASLLLQAQPATGRCYVLTFSAKHDTTLADMSATEIVPVIETWTRIYASHLSASHPLRDAAARSLSEIPPNPDGEVEPAKKQQLRYMQIFENKGAAMGCSNPHPHCQIWTTSTLPEEPGKELAQMTKYHREHKGRHLLEDYVKVEMAKGERVVWQNDGFLVVCPWWAVWPFEVLVIAKRHVRALVELTSEERLQFAEAVQEVTRRYDNLFETNFPYSSGIHQAPLDCTEEEAETSWFHMHFYPPLLRSATVRKFLVGYELMAEPQRDITPEQAAARLRDCGGELYRKSLQ.

The Zn(2+) site is built by cysteine 52 and cysteine 55. UDP-alpha-D-glucose contacts are provided by residues alanine 61 and 77-78; that span reads ND. Histidine 126 contacts Zn(2+). Asparagine 194 contacts UDP-alpha-D-glucose. Residue histidine 205 coordinates Zn(2+). The active-site Tele-UMP-histidine intermediate is the histidine 207. Glutamine 209 contributes to the UDP-alpha-D-glucose binding site. Positions 223, 323, 340, and 342 each coordinate Fe cation. Residues 355–358 and 360–361 contribute to the UDP-alpha-D-glucose site; these read KFLV and YE.

This sequence belongs to the galactose-1-phosphate uridylyltransferase type 1 family. As to quaternary structure, homodimer. Requires Zn(2+) as cofactor.

The enzyme catalyses alpha-D-galactose 1-phosphate + UDP-alpha-D-glucose = alpha-D-glucose 1-phosphate + UDP-alpha-D-galactose. Its pathway is carbohydrate metabolism; galactose metabolism. The sequence is that of Galactose-1-phosphate uridylyltransferase (gal-7) from Neurospora crassa (strain ATCC 24698 / 74-OR23-1A / CBS 708.71 / DSM 1257 / FGSC 987).